The chain runs to 218 residues: Probable transaldolase (218 aa).

Residue Lys-87 is the Schiff-base intermediate with substrate of the active site.

It belongs to the transaldolase family. Type 3B subfamily.

Its subcellular location is the cytoplasm. It catalyses the reaction D-sedoheptulose 7-phosphate + D-glyceraldehyde 3-phosphate = D-erythrose 4-phosphate + beta-D-fructose 6-phosphate. Its pathway is carbohydrate degradation; pentose phosphate pathway; D-glyceraldehyde 3-phosphate and beta-D-fructose 6-phosphate from D-ribose 5-phosphate and D-xylulose 5-phosphate (non-oxidative stage): step 2/3. In terms of biological role, transaldolase is important for the balance of metabolites in the pentose-phosphate pathway. The chain is Probable transaldolase from Phocaeicola vulgatus (strain ATCC 8482 / DSM 1447 / JCM 5826 / CCUG 4940 / NBRC 14291 / NCTC 11154) (Bacteroides vulgatus).